The sequence spans 462 residues: MVEISSISQTLRALRRKQYSCRDLVESLVSRSESATHLNAFAATDWLHLRNEADRVDRNGSGGVGLMGIPLCFKANIATGIFPTSAGTQGLLRHKPAIPAKIVERLHSAGALIGASGNMHELSFGITNDNKTFGPARNPWNQALISGGSSGGVAVSVAANLMLGGIGTDTGASVRLPAALCGVVGFRPTFGNYPTDGIVPVSPSRDTPGLIVRSVEDAVLLDRIIRNKCPTQNMSLKGLRLGLPRSHFFDNLEPHVAAASERAIRRLATNQMTFVEADIPNVAELTRKVSLPVAIYEFPRALMAYLSFHGIGNTFDELIQNIQDPQVYDLVQSQLSKGLISESVYRRALRCYKPRLKATYENYYSSNGLDAVLFPSVPLTAKPVGLQTTLVHNGVETDTFGIFVRNLDPSSNIGLPSLSVPVSLTPDRLPVGIQIEGPFGSDDMVLAIGRAVEEMVKFGQEY.

Residues Lys74 and Ser149 each act as charge relay system in the active site. Catalysis depends on Ser173, which acts as the Acyl-ester intermediate.

The protein belongs to the amidase family.

Its pathway is plant hormone metabolism; auxin biosynthesis. Its function is as follows. Hydrolyzes indole-3-acetamide (IAM) into indole-3-acetic acid (IAA). In Allorhizobium ampelinum (strain ATCC BAA-846 / DSM 112012 / S4) (Agrobacterium vitis (strain S4)), this protein is Indoleacetamide hydrolase (iaaH).